Reading from the N-terminus, the 141-residue chain is Hemoglobin subunit alpha (141 aa).

A Globin domain is found at 1-141 (VLSPGDKSNI…VSTVLTSKYR (141 aa)). Serine 3 bears the Phosphoserine mark. Lysine 7 and lysine 11 each carry N6-succinyllysine. Lysine 16 carries the N6-acetyllysine; alternate modification. At lysine 16 the chain carries N6-succinyllysine; alternate. Tyrosine 24 carries the post-translational modification Phosphotyrosine. Serine 35 bears the Phosphoserine mark. Lysine 40 carries the post-translational modification N6-succinyllysine. Serine 49 is modified (phosphoserine). Histidine 58 contributes to the O2 binding site. Histidine 87 lines the heme b pocket. Serine 102 is modified (phosphoserine). Threonine 108 carries the post-translational modification Phosphothreonine. At serine 124 the chain carries Phosphoserine. Residues threonine 134 and threonine 137 each carry the phosphothreonine modification. Serine 138 is modified (phosphoserine).

It belongs to the globin family. As to quaternary structure, heterotetramer of two alpha chains and two beta chains. In terms of tissue distribution, red blood cells.

Its function is as follows. Involved in oxygen transport from the lung to the various peripheral tissues. Functionally, hemopressin acts as an antagonist peptide of the cannabinoid receptor CNR1. Hemopressin-binding efficiently blocks cannabinoid receptor CNR1 and subsequent signaling. The sequence is that of Hemoglobin subunit alpha (HBA) from Tupaia glis (Common tree shrew).